A 148-amino-acid polypeptide reads, in one-letter code: Nucleoside diphosphate kinase (148 aa).

ATP-binding residues include Lys9, Phe57, Arg85, Thr91, Arg102, and Asn112. His115 serves as the catalytic Pros-phosphohistidine intermediate.

Belongs to the NDK family. As to quaternary structure, homotetramer. Requires Mg(2+) as cofactor.

It localises to the cytoplasm. The enzyme catalyses a 2'-deoxyribonucleoside 5'-diphosphate + ATP = a 2'-deoxyribonucleoside 5'-triphosphate + ADP. It catalyses the reaction a ribonucleoside 5'-diphosphate + ATP = a ribonucleoside 5'-triphosphate + ADP. Its function is as follows. Major role in the synthesis of nucleoside triphosphates other than ATP. The ATP gamma phosphate is transferred to the NDP beta phosphate via a ping-pong mechanism, using a phosphorylated active-site intermediate. The chain is Nucleoside diphosphate kinase from Macrococcus caseolyticus (strain JCSC5402) (Macrococcoides caseolyticum).